A 276-amino-acid chain; its full sequence is 2-dehydro-3-deoxyphosphooctonate aldolase (276 aa).

Belongs to the KdsA family.

The protein localises to the cytoplasm. The enzyme catalyses D-arabinose 5-phosphate + phosphoenolpyruvate + H2O = 3-deoxy-alpha-D-manno-2-octulosonate-8-phosphate + phosphate. It participates in carbohydrate biosynthesis; 3-deoxy-D-manno-octulosonate biosynthesis; 3-deoxy-D-manno-octulosonate from D-ribulose 5-phosphate: step 2/3. It functions in the pathway bacterial outer membrane biogenesis; lipopolysaccharide biosynthesis. The chain is 2-dehydro-3-deoxyphosphooctonate aldolase from Xanthomonas euvesicatoria pv. vesicatoria (strain 85-10) (Xanthomonas campestris pv. vesicatoria).